Reading from the N-terminus, the 228-residue chain is Geranylgeranylglyceryl phosphate synthase (228 aa).

Lysine 13 contributes to the sn-glycerol 1-phosphate binding site. Residues aspartate 15 and threonine 41 each coordinate Mg(2+). Residues 159 to 164, glycine 189, and 209 to 210 each bind sn-glycerol 1-phosphate; these read YVEYSG and GN.

This sequence belongs to the GGGP/HepGP synthase family. Group I subfamily. Requires Mg(2+) as cofactor.

It localises to the cytoplasm. It catalyses the reaction sn-glycerol 1-phosphate + (2E,6E,10E)-geranylgeranyl diphosphate = sn-3-O-(geranylgeranyl)glycerol 1-phosphate + diphosphate. Its pathway is membrane lipid metabolism; glycerophospholipid metabolism. Its function is as follows. Prenyltransferase that catalyzes the transfer of the geranylgeranyl moiety of geranylgeranyl diphosphate (GGPP) to the C3 hydroxyl of sn-glycerol-1-phosphate (G1P). This reaction is the first ether-bond-formation step in the biosynthesis of archaeal membrane lipids. The polypeptide is Geranylgeranylglyceryl phosphate synthase (Methanosphaerula palustris (strain ATCC BAA-1556 / DSM 19958 / E1-9c)).